A 274-amino-acid polypeptide reads, in one-letter code: Protein LIKE COV 3 (274 aa).

At 1-60 the chain is on the cytoplasmic side; sequence METRERDLERLIPMHKSGASPRDVVLSVPPSPLASPIHVAGKEAIYKVIRSWASKKFMTG. Residues 61-81 form a helical membrane-spanning segment; the sequence is CVILLPIAVTFYFTWWFIHFV. The Extracellular segment spans residues 82-93; sequence DGFFSPIYTHLG. Residues 94-114 traverse the membrane as a helical segment; the sequence is INMFGLGFVTSITFIFMVGVF. Over 115–274 the chain is Cytoplasmic; sequence MSSWLGASVL…VCLSLVLAWT (160 aa).

Belongs to the plant COV1 protein family.

Its subcellular location is the membrane. The sequence is that of Protein LIKE COV 3 from Arabidopsis thaliana (Mouse-ear cress).